The following is a 694-amino-acid chain: Nucleolin (694 aa).

Residues 1–277 (MVKLAKTPKN…EAKKKKTETP (277 aa)) are disordered. Acidic residues predominate over residues 26-40 (ESEEEESSDLEESSG). Over residues 46–108 (PPKKQQKAAV…AVVGKGAKNG (63 aa)) the composition is skewed to low complexity. Repeat copies occupy residues 55–61 (VTPAKKA), 62–68 (ATPAKKA), 69–75 (ATPAKKA), 76–82 (VTPAKKA), and 84–90 (ATPAKKA). The tract at residues 55-90 (VTPAKKAATPAKKAATPAKKAVTPAKKAVATPAKKA) is 5 X 7 AA tandem repeats of X-T-P-X-K-K-X. Phosphoserine is present on residues Ser116 and Ser136. The segment covering 116–142 (SEEEDEDDEDDEEDEDEEEESDEEEEP) has biased composition (acidic residues). Positions 143 to 168 (AVPVKPAAKKSAAAVPAKKPAVVPAK) are enriched in low complexity. The residue at position 171 (Ser171) is a Phosphoserine. Acidic residues predominate over residues 171-194 (SEEEEEEDDEEEDEEDDESEDEAM). Over residues 196–213 (TTPAPVKKPTPAKATPAK) the composition is skewed to low complexity. The segment covering 218–246 (SEDEEDEEDEDEDEEDEDDEEEDEEESED) has biased composition (acidic residues). 4 consecutive RRM domains span residues 281-357 (FSLF…KAKS), 371-445 (RTLF…YTGE), 461-535 (KTLI…FSSP), and 553-628 (KTLF…FAKP). The tract at residues 631–694 (EFQRGGGFGG…KPQGKKIKFE (64 aa)) is disordered. A compositionally biased stretch (gly residues) spans 633 to 680 (QRGGGFGGGFGGRGGRGGRGGGRGGFGGRGGGRGFGGRGGGFRGGRGG). Positions 681–694 (GGDHKPQGKKIKFE) are enriched in basic and acidic residues.

Highly phosphorylated during mitosis.

It localises to the nucleus. It is found in the nucleolus. Functionally, nucleolin is the major nucleolar protein of growing eukaryotic cells. It is found associated with intranucleolar chromatin and pre-ribosomal particles. It induces chromatin decondensation by binding to histone H1. It is thought to play a role in pre-rRNA transcription and ribosome assembly. The chain is Nucleolin (NCL) from Gallus gallus (Chicken).